Consider the following 662-residue polypeptide: Calcium-dependent protease (662 aa).

Residues 196–529 form the Peptidase S8 domain; the sequence is QWHLKETTIG…YGRINALKAV (334 aa). Active-site charge relay system residues include D233, H270, and S466. The P/Homo B domain occupies 535–662; sequence AQPEPVSIFT…IRSLTIELGF (128 aa).

The protein belongs to the peptidase S8 family.

The protein resides in the cytoplasm. In terms of biological role, degrades phycobiliproteins in vitro. Has a substrate specificity similar to that of trypsin. This Nostoc sp. (strain PCC 7120 / SAG 25.82 / UTEX 2576) protein is Calcium-dependent protease (prcA).